A 277-amino-acid chain; its full sequence is uncharacterized protein (277 aa).

Belongs to the BtpA family.

The protein localises to the mitochondrion. This is an uncharacterized protein from Caenorhabditis elegans.